Consider the following 236-residue polypeptide: Ribonuclease P protein component 3 (236 aa).

It belongs to the eukaryotic/archaeal RNase P protein component 3 family. As to quaternary structure, consists of a catalytic RNA component and at least 4-5 protein subunits.

The protein resides in the cytoplasm. The enzyme catalyses Endonucleolytic cleavage of RNA, removing 5'-extranucleotides from tRNA precursor.. Functionally, part of ribonuclease P, a protein complex that generates mature tRNA molecules by cleaving their 5'-ends. This is Ribonuclease P protein component 3 from Natronomonas pharaonis (strain ATCC 35678 / DSM 2160 / CIP 103997 / JCM 8858 / NBRC 14720 / NCIMB 2260 / Gabara) (Halobacterium pharaonis).